A 481-amino-acid polypeptide reads, in one-letter code: Adenosylhomocysteinase (481 aa).

Substrate is bound by residues T65, D140, and E200. 201 to 203 (TTT) contributes to the NAD(+) binding site. The substrate site is built by K230 and D234. NAD(+) is bound by residues N235, 264 to 269 (GYGDVG), E287, N322, 343 to 345 (IGH), and N393.

It belongs to the adenosylhomocysteinase family. The cofactor is NAD(+).

The protein localises to the cytoplasm. The enzyme catalyses S-adenosyl-L-homocysteine + H2O = L-homocysteine + adenosine. It functions in the pathway amino-acid biosynthesis; L-homocysteine biosynthesis; L-homocysteine from S-adenosyl-L-homocysteine: step 1/1. Functionally, may play a key role in the regulation of the intracellular concentration of adenosylhomocysteine. This is Adenosylhomocysteinase from Polynucleobacter necessarius subsp. necessarius (strain STIR1).